A 764-amino-acid polypeptide reads, in one-letter code: 1,4-alpha-glucan branching enzyme GlgB (764 aa).

Positions 1-46 (MSAARQPSPTVRDKAAPEPAAPAAPKGARAPRARRAAPPHGVRPAP) are disordered. Low complexity predominate over residues 17–28 (PEPAAPAAPKGA). Residue aspartate 440 is the Nucleophile of the active site. Residue glutamate 493 is the Proton donor of the active site.

This sequence belongs to the glycosyl hydrolase 13 family. GlgB subfamily. As to quaternary structure, monomer.

It carries out the reaction Transfers a segment of a (1-&gt;4)-alpha-D-glucan chain to a primary hydroxy group in a similar glucan chain.. The protein operates within glycan biosynthesis; glycogen biosynthesis. Functionally, catalyzes the formation of the alpha-1,6-glucosidic linkages in glycogen by scission of a 1,4-alpha-linked oligosaccharide from growing alpha-1,4-glucan chains and the subsequent attachment of the oligosaccharide to the alpha-1,6 position. The chain is 1,4-alpha-glucan branching enzyme GlgB (glgB) from Kitasatospora aureofaciens (Streptomyces aureofaciens).